The following is a 118-amino-acid chain: Nitrogenase-stabilizing/protective protein NifW (118 aa).

It belongs to the NifW family. As to quaternary structure, homotrimer; associates with NifD.

May protect the nitrogenase Fe-Mo protein from oxidative damage. The polypeptide is Nitrogenase-stabilizing/protective protein NifW (Rhodopseudomonas palustris (strain BisB5)).